The sequence spans 263 residues: Expansin-like A3 (263 aa).

A signal peptide spans 1 to 20 (MRSFLYLIVVIFLFSSSVNA). Residues 41–147 (SGACAYGPMA…QRVPCNYGKR (107 aa)) enclose the Expansin-like EG45 domain. 2 N-linked (GlcNAc...) asparagine glycosylation sites follow: N99 and N102. Residues 161 to 243 (NYLAIKLLYQ…NWNSGRIYDA (83 aa)) form the Expansin-like CBD domain.

The protein belongs to the expansin family. Expansin-like A subfamily.

The protein resides in the secreted. This is Expansin-like A3 (EXLA3) from Arabidopsis thaliana (Mouse-ear cress).